The sequence spans 475 residues: Aspartyl/glutamyl-tRNA(Asn/Gln) amidotransferase subunit B (475 aa).

The protein belongs to the GatB/GatE family. GatB subfamily. In terms of assembly, heterotrimer of A, B and C subunits.

The catalysed reaction is L-glutamyl-tRNA(Gln) + L-glutamine + ATP + H2O = L-glutaminyl-tRNA(Gln) + L-glutamate + ADP + phosphate + H(+). The enzyme catalyses L-aspartyl-tRNA(Asn) + L-glutamine + ATP + H2O = L-asparaginyl-tRNA(Asn) + L-glutamate + ADP + phosphate + 2 H(+). In terms of biological role, allows the formation of correctly charged Asn-tRNA(Asn) or Gln-tRNA(Gln) through the transamidation of misacylated Asp-tRNA(Asn) or Glu-tRNA(Gln) in organisms which lack either or both of asparaginyl-tRNA or glutaminyl-tRNA synthetases. The reaction takes place in the presence of glutamine and ATP through an activated phospho-Asp-tRNA(Asn) or phospho-Glu-tRNA(Gln). This Chlorobium phaeobacteroides (strain DSM 266 / SMG 266 / 2430) protein is Aspartyl/glutamyl-tRNA(Asn/Gln) amidotransferase subunit B.